Reading from the N-terminus, the 335-residue chain is Proline-rich protein 1 (335 aa).

The first 22 residues, 1–22 (MAITRASFAICILLSLATIATA), serve as a signal peptide directing secretion. 39 tandem repeats follow at residues 30–34 (PPVYT), 35–39 (SPVNK), 40–43 (PTLP), 44–48 (PPVYT), 49–53 (PPVHK), 54–57 (PTLP), 58–62 (PPVYT), 63–67 (PPVHK), 68–71 (PTLS), 72–76 (PPVYT), 77–81 (KPTLP), 82–86 (PPAYT), 87–91 (PPVYN), 92–96 (KPTLP), 97–101 (APVYT), 102–106 (PPVYK), 107–110 (PTLS), 111–115 (PPVYT), 116–120 (KPTLL), 121–125 (PPVFK), 126–130 (PTLSP), 131–135 (PVYTK), 136–139 (PTLS), 140–144 (PTVYK), 145–148 (PTLS), 149–153 (PPVNN), 154–158 (KPSLS), 159–163 (PPVYK), 164–167 (PTLS), 168–172 (PPVYT), 173–177 (KPTLP), 178–182 (PPVYK), 184–189 (SPSYSP), 190–194 (PPPFA), 195–200 (PKPTYT), 201–207 (PPTKPYV), 208–212 (PEIIK), 284–288 (SPVET), and 319–323 (PFYFT). The segment at 30 to 323 (PPVYTSPVNK…LFNVGPFYFT (294 aa)) is 39 X 5 AA approximate repeats.

This sequence belongs to the plant proline-rich protein superfamily. ENOD12 family. Exclusively expressed in roots, especially in root hairs.

It is found in the secreted. The protein localises to the cell wall. Its function is as follows. May contribute to cell wall structure in root hairs. This Arabidopsis thaliana (Mouse-ear cress) protein is Proline-rich protein 1 (PRP1).